Reading from the N-terminus, the 843-residue chain is Eisosome protein 1 (843 aa).

S2 carries the post-translational modification N-acetylserine. S2 carries the post-translational modification Phosphoserine. Residues 13–44 form a disordered region; the sequence is HNIGKTSGGGSRTSSITSSKKSLKHGSKSLRK. The span at 33–44 shows a compositional bias: basic residues; sequence KSLKHGSKSLRK. Phosphoserine is present on residues S88 and S130. The interval 120–174 is disordered; that stretch reads KMGPKVVRNNSITSATSKTSKESQTKRKSKESPGAAASKAYSMTMETTSLSSQTN. Composition is skewed to polar residues over residues 127–137 and 163–174; these read RNNSITSATSK and TMETTSLSSQTN. S182, S401, S584, and S710 each carry phosphoserine. Residues 717-843 are disordered; that stretch reads DLPTQLEKIE…QDAISNQEKK (127 aa). T720 bears the Phosphothreonine mark. The segment covering 752–764 has biased composition (low complexity); that stretch reads STAAKEATETSSA. A phosphoserine mark is found at S763 and S775. Over residues 781–797 the composition is skewed to basic and acidic residues; that stretch reads SGKEDANDCKSAEHSKE. Residues 798 to 810 show a composition bias toward polar residues; sequence ISVSQKAGNNKSL. S816, S828, S829, and S838 each carry phosphoserine.

It belongs to the EIS1 family.

It is found in the cytoplasmic granule. The protein localises to the cell membrane. Required for normal formation of eisosomes, large cytoplasmic protein assemblies that localize to specialized domains on plasma membrane and mark the site of endocytosis. The chain is Eisosome protein 1 (EIS1) from Saccharomyces cerevisiae (strain Lalvin EC1118 / Prise de mousse) (Baker's yeast).